Here is a 133-residue protein sequence, read N- to C-terminus: Small ribosomal subunit protein uS8 (133 aa).

This sequence belongs to the universal ribosomal protein uS8 family. In terms of assembly, part of the 30S ribosomal subunit. Contacts proteins S5 and S12.

Its function is as follows. One of the primary rRNA binding proteins, it binds directly to 16S rRNA central domain where it helps coordinate assembly of the platform of the 30S subunit. The polypeptide is Small ribosomal subunit protein uS8 (Orientia tsutsugamushi (strain Boryong) (Rickettsia tsutsugamushi)).